Here is a 731-residue protein sequence, read N- to C-terminus: MALLKPFPLQHSLRCMASRFLLHSHYHTHTLSFSSISLSRPSIVLNPRVINKLRRLSDAILIRNMVSLRAFMSSSTTTEAFQENTKSKGYGSEQIQVLEGLDPVRKRPGMYIGSTGPRGLHHLVYEILDNAVDEAQAGFATKIDVVLHADNSVSIADNGRGIPTELHPVTKKSSLETVLTVLHAGGKFGGSSSGYNVSGGLHGVGLSVVNALSQALEVTIWRDGKEYQQKYSRGKPITTLICHDLPVEMRDRQGTAIRFWPDKEVFTTEMQFDYNTIAGRIRELAFLNPELTIALKKEDIDPEKIQCNEYFYAGGLVEYVKWLNADKKPLHDVLGFRKEADGITIDMALQWCSDAYSDTMLGYANSIRTIDGGTHIDGVKAALTRILNNLGKKSKTIKEKDISLSGEHVREGLTCVISVKVPNPEFEGQTKTRLGNPEVRKVVDQSVQEYLTEYLELHPDVLDSILSKSLNALKAALAAKRARELVRQKSVLKSSSLPGKLADCSATNPEEAEIFIVEGDSAGGSAKQGRDRRFQAILPLRGKILNIERKDEAAMYKNEEIQNLILGLGLGVKGEDFKKEALRYHKIIILTDADVDGAHIRTLLLTFFFRYQRALFEEGCIYVGVPPLYKVERGKQVYYCYDDAELKKVQRSFPSNASYNIQRFKGLGEMMPAQLWETTMNPETRLLKQLVVEDAAEANVVFSSLMGSRVDIRKQLIQNSASMMNLEQLDI.

Residues 512-619 (AEIFIVEGDS…RYQRALFEEG (108 aa)) enclose the Toprim domain. Mg(2+) contacts are provided by Glu518, Asp592, and Asp594.

Belongs to the type II topoisomerase GyrB family. Made up of two chains. The A chain is responsible for DNA breakage and rejoining; the B chain catalyzes ATP hydrolysis. Requires Mg(2+) as cofactor. Mn(2+) serves as cofactor. The cofactor is Ca(2+). As to expression, ubiquitous.

Its subcellular location is the plastid. The protein resides in the chloroplast. It is found in the mitochondrion. The enzyme catalyses ATP-dependent breakage, passage and rejoining of double-stranded DNA.. Its function is as follows. Seems to play a critical role in chloroplast nucleoid partitioning by regulating DNA topology. A type II topoisomerase that negatively supercoils closed circular double-stranded DNA in an ATP-dependent manner. This is DNA gyrase subunit B, chloroplastic/mitochondrial (GYRB) from Nicotiana benthamiana.